A 1128-amino-acid polypeptide reads, in one-letter code: Lysylphosphatidylglycerol biosynthesis bifunctional protein LysX (1128 aa).

Positions 1 to 47 (MDNPPPTGVAPRHLPPGSVHTGKVTASLSHRRPDSVQDAPPAPVPHR) are disordered. The segment at 1–632 (MDNPPPTGVA…GLHADGSPPD (632 aa)) is phosphatidylglycerol lysyltransferase. 6 consecutive transmembrane segments (helical) span residues 55 to 75 (VPHI…LWSL), 97 to 117 (APDT…AIAS), 121 to 141 (IAWW…GLRF), 147 to 167 (INAL…IAAW), 184 to 204 (GVLV…VEVF), and 240 to 260 (FVNV…VLTL). A disordered region spans residues 619-644 (DTLTGLHADGSPPDWPKPDLLDSGPR). Residues 633-1128 (WPKPDLLDSG…TLPFPLVKPR (496 aa)) are lysine--tRNA ligase. Over residues 634-644 (PKPDLLDSGPR) the composition is skewed to basic and acidic residues. Residues Asp1040 and Glu1047 each coordinate Mg(2+).

In the N-terminal section; belongs to the LPG synthetase family. This sequence in the C-terminal section; belongs to the class-II aminoacyl-tRNA synthetase family. Mg(2+) serves as cofactor.

It is found in the cell membrane. It carries out the reaction tRNA(Lys) + L-lysine + ATP = L-lysyl-tRNA(Lys) + AMP + diphosphate. It catalyses the reaction L-lysyl-tRNA(Lys) + a 1,2-diacyl-sn-glycero-3-phospho-(1'-sn-glycerol) = a 1,2-diacyl-sn-glycero-3-phospho-1'-(3'-O-L-lysyl)-sn-glycerol + tRNA(Lys). Functionally, catalyzes the production of L-lysyl-tRNA(Lys)transfer and the transfer of a lysyl group from L-lysyl-tRNA(Lys) to membrane-bound phosphatidylglycerol (PG), which produces lysylphosphatidylglycerol (LPG), one of the components of the bacterial membrane with a positive net charge. LPG synthesis contributes to the resistance to cationic antimicrobial peptides (CAMPs) and likely protects M.tuberculosis against the CAMPs produced by competiting microorganisms (bacteriocins). In fact, the modification of anionic phosphatidylglycerol with positively charged L-lysine results in repulsion of the peptides. The polypeptide is Lysylphosphatidylglycerol biosynthesis bifunctional protein LysX (lysX) (Nocardia farcinica (strain IFM 10152)).